Consider the following 332-residue polypeptide: Methylthioribose-1-phosphate isomerase (332 aa).

Substrate is bound by residues 44-46, R87, and Q192; that span reads RGA. D233 (proton donor) is an active-site residue. 243–244 provides a ligand contact to substrate; sequence NK.

This sequence belongs to the eIF-2B alpha/beta/delta subunits family. MtnA subfamily.

It carries out the reaction 5-(methylsulfanyl)-alpha-D-ribose 1-phosphate = 5-(methylsulfanyl)-D-ribulose 1-phosphate. It functions in the pathway amino-acid biosynthesis; L-methionine biosynthesis via salvage pathway; L-methionine from S-methyl-5-thio-alpha-D-ribose 1-phosphate: step 1/6. Catalyzes the interconversion of methylthioribose-1-phosphate (MTR-1-P) into methylthioribulose-1-phosphate (MTRu-1-P). The protein is Methylthioribose-1-phosphate isomerase of Dehalococcoides mccartyi (strain CBDB1).